The chain runs to 102 residues: Large ribosomal subunit protein bL21 (102 aa).

Belongs to the bacterial ribosomal protein bL21 family. In terms of assembly, part of the 50S ribosomal subunit. Contacts protein L20.

Functionally, this protein binds to 23S rRNA in the presence of protein L20. This chain is Large ribosomal subunit protein bL21, found in Lachnoclostridium phytofermentans (strain ATCC 700394 / DSM 18823 / ISDg) (Clostridium phytofermentans).